Here is a 1714-residue protein sequence, read N- to C-terminus: Latrophilin Cirl (1714 aa).

Over 1–765 (MSSIDISGRY…LFTMFDGNMR (765 aa)) the chain is Extracellular. In terms of domain architecture, SUEL-type lectin spans 26–115 (ACEGKKLTIE…KYLEAHYQCI (90 aa)). Residue Asn-143 is glycosylated (N-linked (GlcNAc...) asparagine). Residues 183–302 (PPHTVTHSTP…GSPASGNNSV (120 aa)) are disordered. Residues 186-198 (TVTHSTPSSSTVP) are compositionally biased toward low complexity. The segment covering 244–262 (PSSKLPSAGNATAPSNTRI) has biased composition (polar residues). N-linked (GlcNAc...) asparagine glycosylation is present at Asn-253. Low complexity-rich tracts occupy residues 272–282 (DDGTLLTTKSS) and 290–301 (ASNGSPASGNNS). 6 N-linked (GlcNAc...) asparagine glycosylation sites follow: Asn-299, Asn-338, Asn-395, Asn-652, Asn-701, and Asn-728. Positions 373–397 (YDEYDDDPSSTTPAPSGGDCLHNSS) are disordered. In terms of domain architecture, GAIN-B spans 558 to 752 (RSVVQKVKNI…AILMDVVDEH (195 aa)). Disulfide bonds link Cys-707/Cys-734 and Cys-722/Cys-736. The tract at residues 707–752 (CVFWNYIDHAWSANGCSLESTNRTHSVCSCNHLTNFAILMDVVDEH) is GPS. A helical transmembrane segment spans residues 766–786 (VFIYISIAICVVFIVIALLTL). Residues 787-799 (KLFNGVFVKSART) lie on the Cytoplasmic side of the membrane. Residues 800-820 (TIYTSIYVCLLAIELLFLLGI) traverse the membrane as a helical segment. Over 821–826 (EQTETS) the chain is Extracellular. The chain crosses the membrane as a helical span at residues 827–847 (IFCGFITVFLHCAILSGAAWF). Residues 848-873 (CYEAFHSYYTLTSDELLVEVDQTPKV) are Cytoplasmic-facing. The helical transmembrane segment at 874–894 (NWYYLLSYGLSVSVVAISVAI) threads the bilayer. At 895–911 (NPSTYTQNDYCVLMEAN) the chain is on the extracellular side. The chain crosses the membrane as a helical span at residues 912–932 (ILFYATFVAPVLIFFVAAIGY). Residues 933–966 (TFLSWIIMCRKSCTGLKTKEHTRLASVRFDIRCS) are Cytoplasmic-facing. A helical membrane pass occupies residues 967 to 987 (FVFLLLLSAVWCSAYFYLRGA). The Extracellular portion of the chain corresponds to 988–994 (KTDEDTT). Residues 995–1015 (TIYGYCFICFNTLLGLYIFVF) traverse the membrane as a helical segment. Over 1016-1714 (HCIQNEKIRR…VRCYLEPLAK (699 aa)) the chain is Cytoplasmic. Phosphoserine is present on residues Ser-1155, Ser-1245, and Ser-1252. Disordered regions lie at residues 1229–1253 (PNSQ…LHSR), 1268–1287 (KTKQ…LDPP), 1293–1354 (AFYQ…PPPH), 1447–1536 (GGGS…DERM), and 1551–1694 (FQRQ…QQRH). The span at 1296 to 1315 (QQQQQMRRQQQQQQQQQQQQ) shows a compositional bias: low complexity. Phosphoserine is present on residues Ser-1317 and Ser-1318. Composition is skewed to low complexity over residues 1330–1348 (LHLQ…QQQL) and 1453–1478 (GGSV…QQQR). Composition is skewed to acidic residues over residues 1486 to 1500 (DDDD…DEAT) and 1510 to 1523 (CDDD…DLDD). Residues 1524–1536 (DAHKLPPQSDERM) are compositionally biased toward basic and acidic residues. Residues 1565–1580 (GALPPGVAPGAGSAGP) show a composition bias toward low complexity. A compositionally biased stretch (polar residues) spans 1644–1659 (QTPAQKRQQLQKLSPQ). Residues 1660-1675 (STTSSSSHTSHSNLQP) show a composition bias toward low complexity. The span at 1679-1693 (PLTHQHPHPPQHQQR) shows a compositional bias: basic residues.

Belongs to the G-protein coupled receptor 2 family. LN-TM7 subfamily. As to quaternary structure, forms a heterodimer, consisting of a large extracellular region non-covalently linked to a seven-transmembrane moiety. In terms of processing, proteolytically cleaved into 2 subunits, an extracellular subunit and a seven-transmembrane subunit.

The protein localises to the cell membrane. The protein is Latrophilin Cirl of Drosophila ananassae (Fruit fly).